We begin with the raw amino-acid sequence, 117 residues long: DNA-directed RNA polymerase subunit omega (117 aa).

It belongs to the RNA polymerase subunit omega family. As to quaternary structure, the RNAP catalytic core consists of 2 alpha, 1 beta, 1 beta' and 1 omega subunit. When a sigma factor is associated with the core the holoenzyme is formed, which can initiate transcription.

It catalyses the reaction RNA(n) + a ribonucleoside 5'-triphosphate = RNA(n+1) + diphosphate. Promotes RNA polymerase assembly. Latches the N- and C-terminal regions of the beta' subunit thereby facilitating its interaction with the beta and alpha subunits. The protein is DNA-directed RNA polymerase subunit omega of Roseobacter denitrificans (strain ATCC 33942 / OCh 114) (Erythrobacter sp. (strain OCh 114)).